Reading from the N-terminus, the 160-residue chain is Ribosomal RNA large subunit methyltransferase H (160 aa).

Residues Leu77, Gly109, and Leu128 to Phe133 contribute to the S-adenosyl-L-methionine site.

The protein belongs to the RNA methyltransferase RlmH family. As to quaternary structure, homodimer.

It localises to the cytoplasm. It carries out the reaction pseudouridine(1915) in 23S rRNA + S-adenosyl-L-methionine = N(3)-methylpseudouridine(1915) in 23S rRNA + S-adenosyl-L-homocysteine + H(+). In terms of biological role, specifically methylates the pseudouridine at position 1915 (m3Psi1915) in 23S rRNA. The sequence is that of Ribosomal RNA large subunit methyltransferase H from Desulforamulus reducens (strain ATCC BAA-1160 / DSM 100696 / MI-1) (Desulfotomaculum reducens).